We begin with the raw amino-acid sequence, 697 residues long: MFS antiporter QDR3 (697 aa).

Residues 1–141 (MSHSPNLSPQ…ARDYPNKIKY (141 aa)) are Cytoplasmic-facing. The interval 38–109 (HPIGHHGREQ…KPTSTSIKTN (72 aa)) is disordered. Composition is skewed to low complexity over residues 53-69 (NTTK…HTTT) and 85-99 (DLSS…YLSQ). Residues 142 to 162 (LIVFIIAFASLAGPFGTSVML) traverse the membrane as a helical segment. Over 163–180 (PAIDDIVNDLNTNVSTVN) the chain is Extracellular. 2 N-linked (GlcNAc...) asparagine glycosylation sites follow: N175 and N180. Residues 181–201 (VSVGIYLLSLGIFPLWWSSFS) form a helical membrane-spanning segment. Topologically, residues 202-215 (ERFGRRSVYMVSFT) are cytoplasmic. The helical transmembrane segment at 216-236 (LFVAFSIGTALSPNIAALIVL) threads the bilayer. The Extracellular portion of the chain corresponds to 237–240 (RVLQ). The helical transmembrane segment at 241–261 (GGSSASVQAVGAGTIADLFIP) threads the bilayer. Topologically, residues 262–268 (QERGQAM) are cytoplasmic. The chain crosses the membrane as a helical span at residues 269-289 (GLYYLGPLAGPFLAPILGGAV). At 290–296 (SQAWGWR) the chain is on the extracellular side. The helical transmembrane segment at 297-317 (ATQWLLMIISACSFVLITFFL) threads the bilayer. Residues 318 to 485 (PETLRRVDTI…SIILLKHPPV (168 aa)) are Cytoplasmic-facing. The interval 338–367 (DNNGSQNEKIHDDFAGADNSSVHDIDGNPI) is disordered. Residues 486–506 (VLVISFSAISFAAIYFFNMAI) traverse the membrane as a helical segment. The Extracellular segment spans residues 507 to 519 (SYEYARSPYNFSS). The N-linked (GlcNAc...) asparagine glycan is linked to N516. Residues 520–540 (VILGLMYIPNSVTYFMASIIG) form a helical membrane-spanning segment. Over 541-565 (GKWNDRLLNRYAQKHGELVPESRLS) the chain is Cytoplasmic. Residues 566–586 (WNIVVAIILYPMACLIFGWTI) form a helical membrane-spanning segment. At 587–590 (KYRE) the chain is on the extracellular side. Residues 591–611 (FWVIPLIGTALFGFASMLVIG) traverse the membrane as a helical segment. The Cytoplasmic portion of the chain corresponds to 612 to 626 (ATVTYLVDSLPGKGA). A helical membrane pass occupies residues 627–647 (TGVALNNLIRQILAAIATFIV). Residues 648-653 (EPLLRA) lie on the Extracellular side of the membrane. The chain crosses the membrane as a helical span at residues 654–674 (IGAGVLFSIIAGILLVSSLVL). Topologically, residues 675–697 (LYLKKRGAFFREHYDVMDLYAKL) are cytoplasmic.

This sequence belongs to the major facilitator superfamily. CAR1 family.

It localises to the cell membrane. Functionally, MFS antiporter that does not display functional linkage as drug transporter and performs functions that significantly affect biofilm development and virulence. No substrate for transport has been identified yet, but plays an important role in the growth in the host. This is MFS antiporter QDR3 (QDR3) from Candida albicans (strain SC5314 / ATCC MYA-2876) (Yeast).